The sequence spans 214 residues: MRIILLGAPGAGKGTQAQFIMEQYGIPQISTGDMLRAAVKAGTPLGLEAKKVMDAGQLVSDDLIIGLVKERIAQDDCVKGFLLDGFPRTIPQADAMAANGISIDHVIEIDVPDEEIVKRMSGRRVHPGSGRVYHVVFNPPKVEGKDDVTGEDLAIRPDDEEATVRKRLGIYHEQTKPLVEYYGKVAAAGNTQYHKFDGTQSVAAVSAQLASVLK.

10–15 (GAGKGT) is an ATP binding site. Residues 30–59 (STGDMLRAAVKAGTPLGLEAKKVMDAGQLV) are NMP. AMP contacts are provided by residues Thr31, Arg36, 57 to 59 (QLV), 85 to 88 (GFPR), and Gln92. The tract at residues 122-159 (GRRVHPGSGRVYHVVFNPPKVEGKDDVTGEDLAIRPDD) is LID. ATP is bound by residues Arg123 and 132 to 133 (VY). The AMP site is built by Arg156 and Arg167. Gln200 lines the ATP pocket.

Belongs to the adenylate kinase family. In terms of assembly, monomer.

The protein resides in the cytoplasm. It catalyses the reaction AMP + ATP = 2 ADP. The protein operates within purine metabolism; AMP biosynthesis via salvage pathway; AMP from ADP: step 1/1. Functionally, catalyzes the reversible transfer of the terminal phosphate group between ATP and AMP. Plays an important role in cellular energy homeostasis and in adenine nucleotide metabolism. The polypeptide is Adenylate kinase (Shewanella sp. (strain ANA-3)).